Reading from the N-terminus, the 97-residue chain is UPF0147 protein MA_0092 (97 aa).

The protein belongs to the UPF0147 family.

The polypeptide is UPF0147 protein MA_0092 (Methanosarcina acetivorans (strain ATCC 35395 / DSM 2834 / JCM 12185 / C2A)).